Reading from the N-terminus, the 80-residue chain is Cell division protein ZapB (80 aa).

Residues 3 to 80 (FEVFEKLEAK…ALLGKMEDVQ (78 aa)) adopt a coiled-coil conformation.

It belongs to the ZapB family. In terms of assembly, homodimer. The ends of the coiled-coil dimer bind to each other, forming polymers. Interacts with FtsZ.

It is found in the cytoplasm. Its function is as follows. Non-essential, abundant cell division factor that is required for proper Z-ring formation. It is recruited early to the divisome by direct interaction with FtsZ, stimulating Z-ring assembly and thereby promoting cell division earlier in the cell cycle. Its recruitment to the Z-ring requires functional FtsA or ZipA. The chain is Cell division protein ZapB from Photorhabdus laumondii subsp. laumondii (strain DSM 15139 / CIP 105565 / TT01) (Photorhabdus luminescens subsp. laumondii).